The chain runs to 397 residues: Enoyl-[acyl-carrier-protein] reductase [NADH] FabV (397 aa).

Residues 48–53 (GASTGY), 74–75 (FE), 111–112 (DA), and 139–140 (LA) each bind NAD(+). Y225 contacts substrate. Y235 acts as the Proton donor in catalysis. NAD(+) contacts are provided by residues K244 and 273-275 (VVT).

This sequence belongs to the TER reductase family. Monomer.

It catalyses the reaction a 2,3-saturated acyl-[ACP] + NAD(+) = a (2E)-enoyl-[ACP] + NADH + H(+). It participates in lipid metabolism; fatty acid biosynthesis. Its activity is regulated as follows. Resistant to triclosan. Involved in the final reduction of the elongation cycle of fatty acid synthesis (FAS II). Catalyzes the NADH-dependent reduction of the carbon-carbon double bond in the enoyl moiety that is covalently linked to an acyl carrier protein (ACP). This chain is Enoyl-[acyl-carrier-protein] reductase [NADH] FabV, found in Aeromonas salmonicida (strain A449).